Here is a 542-residue protein sequence, read N- to C-terminus: Membrane protein insertase YidC (542 aa).

6 consecutive transmembrane segments (helical) span residues 6 to 26 (NILL…WQTD), 326 to 346 (LVVD…LLMF), 350 to 370 (FVGN…GGLY), 421 to 441 (GGCL…WVLL), 458 to 478 (LSVQ…MFLM), and 501 to 521 (VIFT…WLVG).

This sequence belongs to the OXA1/ALB3/YidC family. Type 1 subfamily. Interacts with the Sec translocase complex via SecD. Specifically interacts with transmembrane segments of nascent integral membrane proteins during membrane integration.

Its subcellular location is the cell inner membrane. Functionally, required for the insertion and/or proper folding and/or complex formation of integral membrane proteins into the membrane. Involved in integration of membrane proteins that insert both dependently and independently of the Sec translocase complex, as well as at least some lipoproteins. Aids folding of multispanning membrane proteins. The polypeptide is Membrane protein insertase YidC (Shewanella frigidimarina (strain NCIMB 400)).